The primary structure comprises 176 residues: Parathyroid hormone-related protein (176 aa).

Positions M1 to G25 are cleaved as a signal peptide. A propeptide spanning residues R26–R37 is cleaved from the precursor. The important for receptor binding stretch occupies residues R58–N69. Residues T76–N157 are disordered. Polar residues-rich tracts occupy residues S77–N91 and T106–K116. The Nuclear localization signal motif lies at T109 to K130. Residues S123 to K133 are compositionally biased toward basic residues.

This sequence belongs to the parathyroid hormone family.

It is found in the secreted. Its subcellular location is the cytoplasm. The protein localises to the nucleus. In terms of biological role, neuroendocrine peptide which is a critical regulator of cellular and organ growth, development, migration, differentiation and survival and of epithelial calcium ion transport. Acts by binding to its receptor, PTH1R, activating G protein-coupled receptor signaling. Regulates endochondral bone development and epithelial-mesenchymal interactions during the formation of the mammary glands and teeth. Required for skeletal homeostasis. Potent inhibitor of osteoclastic bone resorption. In Gallus gallus (Chicken), this protein is Parathyroid hormone-related protein (PTHLH).